The chain runs to 433 residues: uncharacterized protein (433 aa).

The region spanning 104–349 (ERGRNIIQVR…ELEYKKKGIE (246 aa)) is the Radical SAM core domain. Positions 118, 122, and 125 each coordinate [4Fe-4S] cluster. S-adenosyl-L-methionine-binding positions include 171-172 (GE) and 236-238 (MLS). Positions 370-433 (PFKVGEVTKV…KDNIIVAELV (64 aa)) constitute a TRAM domain.

Belongs to the radical SAM superfamily. The cofactor is [4Fe-4S] cluster.

This is an uncharacterized protein from Methanocaldococcus jannaschii (strain ATCC 43067 / DSM 2661 / JAL-1 / JCM 10045 / NBRC 100440) (Methanococcus jannaschii).